A 29-amino-acid chain; its full sequence is YCQKWMWTCDSARKCCEGLVCRLWCKKII.

3 disulfide bridges follow: cysteine 2–cysteine 16, cysteine 9–cysteine 21, and cysteine 15–cysteine 25. Residue isoleucine 29 is modified to Isoleucine amide.

The protein belongs to the neurotoxin 30 (phrixotoxin) family. In terms of tissue distribution, expressed by the venom gland.

It localises to the secreted. Potent and specific blocker of Kv4.2/KCND2 (IC(50)=5 nM) and Kv4.3/KCND3 (IC(50)=28 nM) potassium channels. Acts by altering the gating properties of these channels. Also shows moderate inhibition on human voltage-gated sodium channel Nav1.7/SCN9A activation (IC(50)=423 nM). This chain is Kappa-theraphotoxin-Ps1a, found in Paraphysa scrofa (Chilean copper tarantula).